A 116-amino-acid polypeptide reads, in one-letter code: Protein Rev (116 aa).

Residues serine 5 and serine 8 each carry the phosphoserine; by host CK2 modification. The segment at 18 to 26 (LIKILYQSN) is homomultimerization. Residues 26-50 (NPYPKPNGSRQARRNRRRRWRARQN) are disordered. A Nuclear localization signal and RNA-binding (RRE) motif is present at residues 34-50 (SRQARRNRRRRWRARQN). Positions 36–47 (QARRNRRRRWRA) are enriched in basic residues. A Nuclear export signal and binding to XPO1 motif is present at residues 73-84 (LQLPPIERLRLD). The segment at 91-116 (NSGTQGVGDPQISGEPCMVLGAGTKE) is disordered. Serine 92 is subject to Phosphoserine; by host.

The protein belongs to the HIV-1 REV protein family. In terms of assembly, homomultimer; when bound to the RRE. Multimeric assembly is essential for activity and may involve XPO1. Binds to human KPNB1, XPO1, TNPO1, RANBP5 and IPO7. Interacts with the viral Integrase. Interacts with human KHDRBS1. Interacts with human NAP1; this interaction decreases Rev multimerization and stimulates its activity. Interacts with human DEAD-box helicases DDX3 and DDX24; these interactions may serve for viral RNA export to the cytoplasm and packaging, respectively. Interacts with human PSIP1; this interaction may inhibit HIV-1 DNA integration by promoting dissociation of the Integrase-LEDGF/p75 complex. Asymmetrically arginine dimethylated at one site by host PRMT6. Methylation impairs the RNA-binding activity and export of viral RNA from the nucleus to the cytoplasm. In terms of processing, phosphorylated by protein kinase CK2. Presence of, and maybe binding to the N-terminus of the regulatory beta subunit of CK2 is necessary for CK2-mediated Rev's phosphorylation.

The protein localises to the host nucleus. Its subcellular location is the host nucleolus. It is found in the host cytoplasm. Functionally, escorts unspliced or incompletely spliced viral pre-mRNAs (late transcripts) out of the nucleus of infected cells. These pre-mRNAs carry a recognition sequence called Rev responsive element (RRE) located in the env gene, that is not present in fully spliced viral mRNAs (early transcripts). This function is essential since most viral proteins are translated from unspliced or partially spliced pre-mRNAs which cannot exit the nucleus by the pathway used by fully processed cellular mRNAs. Rev itself is translated from a fully spliced mRNA that readily exits the nucleus. Rev's nuclear localization signal (NLS) binds directly to KPNB1/Importin beta-1 without previous binding to KPNA1/Importin alpha-1. KPNB1 binds to the GDP bound form of RAN (Ran-GDP) and targets Rev to the nucleus. In the nucleus, the conversion from Ran-GDP to Ran-GTP dissociates Rev from KPNB1 and allows Rev's binding to the RRE in viral pre-mRNAs. Rev multimerization on the RRE via cooperative assembly exposes its nuclear export signal (NES) to the surface. Rev can then form a complex with XPO1/CRM1 and Ran-GTP, leading to nuclear export of the complex. Conversion from Ran-GTP to Ran-GDP mediates dissociation of the Rev/RRE/XPO1/RAN complex, so that Rev can return to the nucleus for a subsequent round of export. Beside KPNB1, also seems to interact with TNPO1/Transportin-1, RANBP5/IPO5 and IPO7/RANBP7 for nuclear import. The nucleoporin-like HRB/RIP is an essential cofactor that probably indirectly interacts with Rev to release HIV RNAs from the perinuclear region to the cytoplasm. The chain is Protein Rev from Homo sapiens (Human).